Here is a 1130-residue protein sequence, read N- to C-terminus: ABC transporter ATM1 (1130 aa).

The N-terminal 65 residues, 1 to 65 (MQPPTRAPFF…ESFHSSAFQL (65 aa)), are a transit peptide targeting the mitochondrion. 3 disordered regions span residues 191–212 (DAWT…CVRP), 276–315 (HHAP…RNMS), and 341–385 (STFS…TSSP). Composition is skewed to polar residues over residues 195–206 (SGCSGQTDNATA) and 305–315 (GSLTLSPRNMS). A helical membrane pass occupies residues 406-426 (PNPTSLQLLFSLFPFLWPTAL). Residues 468-502 (PLSPSGASPSSGDTSLLASSGETSSSLSPSAAPAE) show a composition bias toward low complexity. The disordered stretch occupies residues 468-554 (PLSPSGASPS…AGKAGTSVGG (87 aa)). The span at 503–523 (GAREAGKSGESAGRERRDEGS) shows a compositional bias: basic and acidic residues. A run of 5 helical transmembrane segments spans residues 574–594 (IVSV…AATG), 653–673 (VLLF…YLLG), 678–698 (GPVA…TAAV), 761–781 (LAFL…GSLA), and 791–811 (LLPV…AVPL). The region spanning 587–823 (VARIAATGFN…VGTIYRETSL (237 aa)) is the ABC transmembrane type-1 domain. One can recognise an ABC transporter domain in the interval 857–1111 (VAFENVRFAY…ERGLYRALWE (255 aa)). 910–917 (GPSGVGKS) contributes to the ATP binding site.

The protein belongs to the ABC transporter superfamily. ABCB family. Heavy Metal importer (TC 3.A.1.210) subfamily. Homodimer.

It is found in the mitochondrion membrane. Functionally, probably transports iron-sulfur clusters in an ATP-dependent manner. Plays a role in [Fe-S] proteins homeostasis. Required for optimal parasite growth and lytic cycle. This Toxoplasma gondii (strain ATCC 50611 / Me49) protein is ABC transporter ATM1.